Consider the following 286-residue polypeptide: MSKDNLHRYLFENADVRGELVQLEQSYQEILSAHTYPTQIQELLGELMAATSLLTATLKFSGDISVQLQGDGPISLAVINGNNLQQLRGVARWDGELSDGATLQQLFGKGHMVITLTPAKGERYQGVVALDKDSLAACLEEYFTQSEQLPTKISLFANGKQAAGMLLQVLPSEGDHNAEFEHLEQLTATVKAEELFELEAEEVLHRLYHQEEVRLFDPIEVTFSCTCSRERSASAIRTVSKAEIDTIIAEQGKIEMGCEYCNTTYDFDSIDVEAIFSNTQAPETKQ.

Intrachain disulfides connect C225-C227 and C258-C261.

This sequence belongs to the HSP33 family. Under oxidizing conditions two disulfide bonds are formed involving the reactive cysteines. Under reducing conditions zinc is bound to the reactive cysteines and the protein is inactive.

The protein localises to the cytoplasm. In terms of biological role, redox regulated molecular chaperone. Protects both thermally unfolding and oxidatively damaged proteins from irreversible aggregation. Plays an important role in the bacterial defense system toward oxidative stress. This chain is 33 kDa chaperonin, found in Shewanella sediminis (strain HAW-EB3).